The sequence spans 279 residues: Tryptophan 2,3-dioxygenase (279 aa).

Substrate is bound by residues 48–52, Tyr-110, and Arg-114; that span reads FIIQH. A heme-binding site is contributed by His-237. Position 251 (Thr-251) interacts with substrate.

This sequence belongs to the tryptophan 2,3-dioxygenase family. In terms of assembly, homotetramer. It depends on heme as a cofactor.

The catalysed reaction is L-tryptophan + O2 = N-formyl-L-kynurenine. The protein operates within amino-acid degradation; L-tryptophan degradation via kynurenine pathway; L-kynurenine from L-tryptophan: step 1/2. Heme-dependent dioxygenase that catalyzes the oxidative cleavage of the L-tryptophan (L-Trp) pyrrole ring and converts L-tryptophan to N-formyl-L-kynurenine. Catalyzes the oxidative cleavage of the indole moiety. The chain is Tryptophan 2,3-dioxygenase from Bradyrhizobium sp. (strain ORS 278).